The following is a 546-amino-acid chain: MTKYVFVTGGVVSSLGKGIAAASLGAILESRGIKVTHLKLDPYINVDPGTMSPFQHGEVFVTEDGAETDLDLGHYERFTSAKMSKRNNFTTGQIYEAVIKKERRGEYLGKTVQVIPHITDEIKSYVKRGAEGADVAIVEVGGTVGDIESLPFLEAIRQMGIEEGRNATCFIHLTLLPYIPTAGELKTKPTQHSVKELREIGIQPDILLCRADRSIPADERRKIALFCNVMPEAVIECLDADSIYKIPGQLHDQMLDEIVCHKLGILARAADLSVWENLIRALENPKQAVDIAFVGKYVDLTESYKSLIEALNHAGMHTESKVNIHYLDSEEIERSGCAVLEKMDAILVPGGFGKRGTEGKIAAIRYARENKVPYLGICLGMQLAVVEFARDVAGMAEAHSTEFERETPFPVIGLITEWADRSGKVEKRSEDSDLGGTMRLGGQVCKLADGTLAREVYGSGEIMERHRHRYEVNNTLLAQLEEKGLVVSGRAPVTDLCEMVELPADVHPWFVGCQFHPEFTSNPRKGHPLFTAYVKAAIARHSASRG.

The segment at 1–265 (MTKYVFVTGG…DEIVCHKLGI (265 aa)) is amidoligase domain. Ser13 provides a ligand contact to CTP. UTP is bound at residue Ser13. ATP is bound by residues 14–19 (SLGKGI) and Asp71. Residues Asp71 and Glu139 each coordinate Mg(2+). Residues 146-148 (DIE), 186-191 (KTKPTQ), and Lys222 contribute to the CTP site. Residues 186 to 191 (KTKPTQ) and Lys222 each bind UTP. The Glutamine amidotransferase type-1 domain occupies 290–543 (DIAFVGKYVD…VKAAIARHSA (254 aa)). Gly351 lines the L-glutamine pocket. Cys378 functions as the Nucleophile; for glutamine hydrolysis in the catalytic mechanism. Residues 379–382 (LGMQ), Glu402, and Arg469 each bind L-glutamine. Catalysis depends on residues His516 and Glu518.

Belongs to the CTP synthase family. In terms of assembly, homotetramer.

It catalyses the reaction UTP + L-glutamine + ATP + H2O = CTP + L-glutamate + ADP + phosphate + 2 H(+). It carries out the reaction L-glutamine + H2O = L-glutamate + NH4(+). The enzyme catalyses UTP + NH4(+) + ATP = CTP + ADP + phosphate + 2 H(+). It participates in pyrimidine metabolism; CTP biosynthesis via de novo pathway; CTP from UDP: step 2/2. Allosterically activated by GTP, when glutamine is the substrate; GTP has no effect on the reaction when ammonia is the substrate. The allosteric effector GTP functions by stabilizing the protein conformation that binds the tetrahedral intermediate(s) formed during glutamine hydrolysis. Inhibited by the product CTP, via allosteric rather than competitive inhibition. Its function is as follows. Catalyzes the ATP-dependent amination of UTP to CTP with either L-glutamine or ammonia as the source of nitrogen. Regulates intracellular CTP levels through interactions with the four ribonucleotide triphosphates. The sequence is that of CTP synthase from Azoarcus sp. (strain BH72).